The following is a 364-amino-acid chain: MGSSFGDLFRISTFGESHGGGVGVIVEGCPPRLELDLDEIQAELNRRKPGQSHITTPRKEADQVEILSGLLDGKTTLGTPIAMLVRNKDQRPGDYSDMAVAFRPSHADATYQSKYGIQARSGGGRASARETIGRVAAGAIAKQLLRKAAGTEILAWVKQIHTIEAHGIDPSTVSMNDIEANIVRCPEASVANQMIERIEAIGREGDSCGGVIECVVRQPAVGLGMPVFDKLEADLAKAVMSLPATKGFEIGSGFSGTLLKGSEHNDAFIPGDDGRLHTATNNSGGIQGGISNGEPIVIRVGFKPTATIRKEQQTIDSDGNATTLAAKGRHDPCVLPRAVPMVEAMVALTLADHLLRQQGQCSLW.

Arginine 47 serves as a coordination point for NADP(+). Residues 125 to 127, glycine 288, 303 to 307, and arginine 329 contribute to the FMN site; these read RAS and KPTAT.

This sequence belongs to the chorismate synthase family. Homotetramer. It depends on FMNH2 as a cofactor.

It carries out the reaction 5-O-(1-carboxyvinyl)-3-phosphoshikimate = chorismate + phosphate. It functions in the pathway metabolic intermediate biosynthesis; chorismate biosynthesis; chorismate from D-erythrose 4-phosphate and phosphoenolpyruvate: step 7/7. In terms of biological role, catalyzes the anti-1,4-elimination of the C-3 phosphate and the C-6 proR hydrogen from 5-enolpyruvylshikimate-3-phosphate (EPSP) to yield chorismate, which is the branch point compound that serves as the starting substrate for the three terminal pathways of aromatic amino acid biosynthesis. This reaction introduces a second double bond into the aromatic ring system. In Synechococcus sp. (strain CC9902), this protein is Chorismate synthase.